The primary structure comprises 439 residues: Acyl transferase 7 (439 aa).

The disordered stretch occupies residues 1-25 (MAAAAPDKAVERLSQKLVHPSSPTP). Catalysis depends on proton acceptor residues His176 and Asp383.

It belongs to the plant acyltransferase family.

Its function is as follows. Involved in the incorporation of ferulate into the cell wall. May act as arabinoxylan feruloyl transferase. The sequence is that of Acyl transferase 7 from Oryza sativa subsp. japonica (Rice).